We begin with the raw amino-acid sequence, 298 residues long: Ankyrin repeat domain-containing protein 29 (298 aa).

8 ANK repeats span residues 8–38, 42–71, 75–104, 108–137, 141–170, 174–203, 207–236, and 239–268; these read PLAN…DVDC, YGTT…DINL, TGST…STEF, DGGT…NVHD, DGAT…KVNQ, DGTA…DRDA, DGST…SLGI, and NGST…DPAL.

The sequence is that of Ankyrin repeat domain-containing protein 29 (ankrd29) from Danio rerio (Zebrafish).